A 131-amino-acid polypeptide reads, in one-letter code: Large ribosomal subunit protein bL12 (131 aa).

The segment covering 99 to 125 has biased composition (basic and acidic residues); sequence ESTPKPIKEGTNKDDAEETKKKLEEAG. Residues 99–131 form a disordered region; it reads ESTPKPIKEGTNKDDAEETKKKLEEAGAKVTVK.

This sequence belongs to the bacterial ribosomal protein bL12 family. As to quaternary structure, homodimer. Part of the ribosomal stalk of the 50S ribosomal subunit. Forms a multimeric L10(L12)X complex, where L10 forms an elongated spine to which 2 to 4 L12 dimers bind in a sequential fashion. Binds GTP-bound translation factors.

Functionally, forms part of the ribosomal stalk which helps the ribosome interact with GTP-bound translation factors. Is thus essential for accurate translation. This chain is Large ribosomal subunit protein bL12, found in Gloeothece citriformis (strain PCC 7424) (Cyanothece sp. (strain PCC 7424)).